A 968-amino-acid polypeptide reads, in one-letter code: RNA polymerase-associated protein RapA (968 aa).

The Helicase ATP-binding domain occupies 164 to 334 (DVGRRHAPRV…FARLRLLDPN (171 aa)). 177 to 184 (DEVGLGKT) contacts ATP. Positions 280-283 (DEAH) match the DEAH box motif. The Helicase C-terminal domain occupies 490–662 (RVEWLMGYLT…YLASPDQTEG (173 aa)).

It belongs to the SNF2/RAD54 helicase family. RapA subfamily. Interacts with the RNAP. Has a higher affinity for the core RNAP than for the holoenzyme. Its ATPase activity is stimulated by binding to RNAP.

In terms of biological role, transcription regulator that activates transcription by stimulating RNA polymerase (RNAP) recycling in case of stress conditions such as supercoiled DNA or high salt concentrations. Probably acts by releasing the RNAP, when it is trapped or immobilized on tightly supercoiled DNA. Does not activate transcription on linear DNA. Probably not involved in DNA repair. In Shigella dysenteriae serotype 1 (strain Sd197), this protein is RNA polymerase-associated protein RapA.